A 329-amino-acid polypeptide reads, in one-letter code: UPF0158 protein CT_429 (329 aa).

The segment at glycine 292–serine 329 is disordered. A compositionally biased stretch (acidic residues) spans serine 295–glutamate 313. Residues lysine 317–serine 329 show a composition bias toward basic residues.

Belongs to the UPF0158 family.

The protein is UPF0158 protein CT_429 of Chlamydia trachomatis serovar D (strain ATCC VR-885 / DSM 19411 / UW-3/Cx).